Here is a 647-residue protein sequence, read N- to C-terminus: Type II methyltransferase M.FokI (647 aa).

2 consecutive short sequence motifs (adenine-specific methylase) follow at residues 218–221 and 548–551; these read DPPY.

The protein belongs to the N(4)/N(6)-methyltransferase family. As to quaternary structure, monomer.

The enzyme catalyses a 2'-deoxyadenosine in DNA + S-adenosyl-L-methionine = an N(6)-methyl-2'-deoxyadenosine in DNA + S-adenosyl-L-homocysteine + H(+). Its function is as follows. An alpha subtype methylase that recognizes the asymmetric double-stranded sequence 5'-GGATG-3', methylates A-3 of both strands, and protects the DNA from cleavage by the FokI endonuclease. This Planomicrobium okeanokoites (Planococcus okeanokoites) protein is Type II methyltransferase M.FokI.